The sequence spans 598 residues: NADPH-dependent diflavin oxidoreductase 1 (598 aa).

A Flavodoxin-like domain is found at 6–150; it reads LLVLFGSQTG…AIDPWVGDLW (145 aa). Residues 12-17, 59-62, 97-106, and D132 each bind FMN; these read SQTGTA, ATTG, and LGDSSYAKFN. Residues 206-448 form the FAD-binding FR-type domain; sequence LQPFLAPVIT…VRPGSLVFPK (243 aa). Residues R350, 382–385, and 416–419 contribute to the FAD site; these read RAFS and GLCS. NADP(+) contacts are provided by residues T461, 516-517, 522-526, and D559; these read SR and KVYVQ. FAD is bound at residue W597.

The protein belongs to the NADPH-dependent diflavin oxidoreductase NDOR1 family. In the N-terminal section; belongs to the flavodoxin family. This sequence in the C-terminal section; belongs to the flavoprotein pyridine nucleotide cytochrome reductase family. As to quaternary structure, interacts with CIAPIN1; as part of the cytosolic iron-sulfur (Fe-S) protein assembly (CIA) machinery. Interacts with DCPS. Requires FAD as cofactor. The cofactor is FMN.

It localises to the cytoplasm. It is found in the perinuclear region. The enzyme catalyses 2 oxidized [2Fe-2S]-[protein] + NADPH = 2 reduced [2Fe-2S]-[protein] + NADP(+) + H(+). In terms of biological role, NADPH-dependent reductase which is a central component of the cytosolic iron-sulfur (Fe-S) protein assembly (CIA) machinery. Transfers electrons from NADPH via its FAD and FMN prosthetic groups to the [2Fe-2S] cluster of CIAPIN1, another key component of the CIA machinery. In turn, this reduced cluster provides electrons for assembly of cytosolic iron-sulfur cluster proteins. It can also reduce the [2Fe-2S] cluster of CISD1 and activate this protein implicated in Fe/S cluster repair. In vitro can fully activate methionine synthase/MTR in the presence of soluble cytochrome b5/CYB5A. In Mus musculus (Mouse), this protein is NADPH-dependent diflavin oxidoreductase 1.